The chain runs to 268 residues: Undecaprenyl-diphosphatase (268 aa).

Transmembrane regions (helical) follow at residues 43–63, 83–103, 109–129, 144–164, 184–204, 218–238, and 246–266; these read FWNTFTVLIQLGAILAIVVIY, FVIGVLAAFLPAVVVGLIAGK, LFNPWVVCFSLIVGGAVLMWV, FPLPMYIWIGIAQCLAMIPGV, AAEFSFFLAIPTMIGAFAYDF, IVAIGFVVSFVTAIVVVKAFL, and FTFFAWWRVIVGTLGLIALAL.

The protein belongs to the UppP family.

The protein resides in the cell inner membrane. It carries out the reaction di-trans,octa-cis-undecaprenyl diphosphate + H2O = di-trans,octa-cis-undecaprenyl phosphate + phosphate + H(+). Catalyzes the dephosphorylation of undecaprenyl diphosphate (UPP). Confers resistance to bacitracin. This is Undecaprenyl-diphosphatase from Nitrobacter hamburgensis (strain DSM 10229 / NCIMB 13809 / X14).